The sequence spans 445 residues: Nuclear envelope integral membrane protein 1 (445 aa).

The signal sequence occupies residues 1–44; that stretch reads MAGGMKVAVLPAVGAGPWSWGAGGCGAVRLLLVLFGCFVCGSAG. Residue N125 is glycosylated (N-linked (GlcNAc...) asparagine). 5 helical membrane-spanning segments follow: residues 161–181, 186–206, 216–236, 245–265, and 289–309; these read PKLF…DLLS, FYYS…IIFI, PIYI…QLVF, CYWQ…FAVC, and LCFM…VVIA. The a; required for its colocalization with lamins at the nuclear envelope stretch occupies residues 186 to 297; it reads FYYSTGMSVG…GLCFMYSSIQ (112 aa). Residues 336–405 form a b; required for interaction with RAN-GTP region; the sequence is TVPPRLLTEE…LTPNEVSVHE (70 aa). The segment at 336-445 is required for nuclear localization; that stretch reads TVPPRLLTEE…LVVQQNSFLT (110 aa). Phosphoserine is present on residues S368, S424, and S425. Acidic residues predominate over residues 418–430; sequence ELSEETSSEEEDS. The disordered stretch occupies residues 418 to 445; it reads ELSEETSSEEEDSDSRYPLVVQQNSFLT.

The protein belongs to the NEMP family. As to quaternary structure, homooligomer. Interacts with RAN-GTP. Interacts with EMD. Phosphorylation may regulate its interaction with RAN-GTP.

The protein localises to the nucleus inner membrane. Its subcellular location is the nucleus envelope. In terms of biological role, together with EMD, contributes to nuclear envelope stiffness in germ cells. Required for female fertility. Essential for normal erythropoiesis. Required for efficient nuclear envelope opening and enucleation during the late stages of erythroblast maturation. In Bos taurus (Bovine), this protein is Nuclear envelope integral membrane protein 1 (NEMP1).